The chain runs to 257 residues: Aspartate/glutamate leucyltransferase (257 aa).

It belongs to the R-transferase family. Bpt subfamily.

The protein resides in the cytoplasm. It catalyses the reaction N-terminal L-glutamyl-[protein] + L-leucyl-tRNA(Leu) = N-terminal L-leucyl-L-glutamyl-[protein] + tRNA(Leu) + H(+). The enzyme catalyses N-terminal L-aspartyl-[protein] + L-leucyl-tRNA(Leu) = N-terminal L-leucyl-L-aspartyl-[protein] + tRNA(Leu) + H(+). Functions in the N-end rule pathway of protein degradation where it conjugates Leu from its aminoacyl-tRNA to the N-termini of proteins containing an N-terminal aspartate or glutamate. The polypeptide is Aspartate/glutamate leucyltransferase (Rhodopseudomonas palustris (strain HaA2)).